A 327-amino-acid chain; its full sequence is GTP 3',8-cyclase (327 aa).

Positions 8 to 232 constitute a Radical SAM core domain; sequence AFARKFYYLR…LQRSRSDGPA (225 aa). R17 contacts GTP. [4Fe-4S] cluster contacts are provided by C24 and C28. An S-adenosyl-L-methionine-binding site is contributed by Y30. [4Fe-4S] cluster is bound at residue C31. R66 lines the GTP pocket. G70 is an S-adenosyl-L-methionine binding site. T97 contacts GTP. Position 121 (S121) interacts with S-adenosyl-L-methionine. K158 is a GTP binding site. M192 lines the S-adenosyl-L-methionine pocket. [4Fe-4S] cluster is bound by residues C255 and C258. Residue 260–262 participates in GTP binding; the sequence is RLR. Position 272 (C272) interacts with [4Fe-4S] cluster.

This sequence belongs to the radical SAM superfamily. MoaA family. In terms of assembly, monomer and homodimer. Requires [4Fe-4S] cluster as cofactor.

It carries out the reaction GTP + AH2 + S-adenosyl-L-methionine = (8S)-3',8-cyclo-7,8-dihydroguanosine 5'-triphosphate + 5'-deoxyadenosine + L-methionine + A + H(+). It functions in the pathway cofactor biosynthesis; molybdopterin biosynthesis. In terms of biological role, catalyzes the cyclization of GTP to (8S)-3',8-cyclo-7,8-dihydroguanosine 5'-triphosphate. The sequence is that of GTP 3',8-cyclase from Photorhabdus laumondii subsp. laumondii (strain DSM 15139 / CIP 105565 / TT01) (Photorhabdus luminescens subsp. laumondii).